A 289-amino-acid polypeptide reads, in one-letter code: Enoyl-CoA hydratase domain-containing protein 3, mitochondrial (289 aa).

Residues 1–14 (MLLRGFSELLKCRG) constitute a mitochondrion transit peptide.

It belongs to the enoyl-CoA hydratase/isomerase family.

The protein resides in the mitochondrion. May play a role in fatty acid biosynthesis and insulin sensitivity. In Danio rerio (Zebrafish), this protein is Enoyl-CoA hydratase domain-containing protein 3, mitochondrial (echdc3).